The primary structure comprises 125 residues: Small ribosomal subunit protein eS6 (125 aa).

The tract at residues 90–109 is disordered; the sequence is KGPGFRPKEKGERRKKTVRG.

Belongs to the eukaryotic ribosomal protein eS6 family. Part of the 30S ribosomal subunit.

The sequence is that of Small ribosomal subunit protein eS6 from Pyrococcus furiosus (strain ATCC 43587 / DSM 3638 / JCM 8422 / Vc1).